The primary structure comprises 119 residues: Ribonuclease P protein component (119 aa).

The interval methionine 1–lysine 20 is disordered.

This sequence belongs to the RnpA family. As to quaternary structure, consists of a catalytic RNA component (M1 or rnpB) and a protein subunit.

The catalysed reaction is Endonucleolytic cleavage of RNA, removing 5'-extranucleotides from tRNA precursor.. RNaseP catalyzes the removal of the 5'-leader sequence from pre-tRNA to produce the mature 5'-terminus. It can also cleave other RNA substrates such as 4.5S RNA. The protein component plays an auxiliary but essential role in vivo by binding to the 5'-leader sequence and broadening the substrate specificity of the ribozyme. The chain is Ribonuclease P protein component from Mycolicibacterium vanbaalenii (strain DSM 7251 / JCM 13017 / BCRC 16820 / KCTC 9966 / NRRL B-24157 / PYR-1) (Mycobacterium vanbaalenii).